The sequence spans 1887 residues: Nuclear pore membrane glycoprotein 210 (1887 aa).

The N-terminal stretch at 1-26 is a signal peptide; that stretch reads MAARGRGLLLLTLSVLLAAGPSAAAA. Residues 27–1808 lie on the Perinuclear space side of the membrane; it reads KLNIPKVLLP…LFQHFLDSYQ (1782 aa). N-linked (GlcNAc...) asparagine glycans are attached at residues asparagine 44, asparagine 337, asparagine 405, asparagine 484, asparagine 681, asparagine 801, asparagine 926, asparagine 1039, asparagine 1116, asparagine 1135, asparagine 1362, and asparagine 1441. Residues 1078–1151 enclose the BIG2 domain; that stretch reads FPPFRLMPRK…VQAVDAETGK (74 aa). Residues 1809–1829 form a helical membrane-spanning segment; it reads VMFFTLFALLAGTAVMIIAYH. Residues 1830-1887 lie on the Cytoplasmic side of the membrane; that stretch reads TVCTPRDLAVPAALTPRASPGHSPHYFAASSPTSPNALPPARKASPPSGLWSPAYASH. Threonine 1844 is modified (phosphothreonine). The interval 1853 to 1887 is disordered; the sequence is PHYFAASSPTSPNALPPARKASPPSGLWSPAYASH. Phosphoserine occurs at positions 1874, 1877, 1881, and 1886.

Belongs to the NUP210 family. Forms dimers and possibly higher-order oligomers. N-glycosylated, but not all potential glycosylation sites may be used. Contains high-mannose type oligosaccharides. In terms of processing, phosphorylated at Ser-1881 in mitosis specifically; not phosphorylated in interphase. As to expression, ubiquitous expression, with highest levels in lung, liver, pancreas, testis, and ovary, intermediate levels in brain, kidney, and spleen, and lowest levels in heart and skeletal muscle.

The protein resides in the nucleus. It is found in the nuclear pore complex. The protein localises to the nucleus membrane. It localises to the endoplasmic reticulum membrane. Nucleoporin essential for nuclear pore assembly and fusion, nuclear pore spacing, as well as structural integrity. This chain is Nuclear pore membrane glycoprotein 210 (NUP210), found in Homo sapiens (Human).